The following is a 107-amino-acid chain: MAPPLPRTPTPTHPHSHAPPLPRTPTPAHPHSHAPPLPRTPTPTHPHSHAPPRSIQHRQGKDTKVNLYFPIDSKNPLSFLLGPTLKTRWCVVPVSFTFPLPDTDWLV.

Residues 1–44 (MAPPLPRTPTPTHPHSHAPPLPRTPTPAHPHSHAPPLPRTPTPT) are compositionally biased toward pro residues. The disordered stretch occupies residues 1–63 (MAPPLPRTPT…SIQHRQGKDT (63 aa)). 3 repeat units span residues 2 to 17 (APPL…PHSH), 18 to 33 (APPL…PHSH), and 34 to 49 (APPL…PHSH). A 3 X 17 AA tandem repeats region spans residues 2-49 (APPLPRTPTPTHPHSHAPPLPRTPTPAHPHSHAPPLPRTPTPTHPHSH). Basic residues predominate over residues 46–58 (PHSHAPPRSIQHR).

The chain is Latency-related protein 2 from Homo sapiens (Human).